A 271-amino-acid polypeptide reads, in one-letter code: Transmembrane protein 33 homolog (271 aa).

A disordered region spans residues Met1–Pro32. Positions Ser13–Ser25 are enriched in low complexity. A run of 3 helical transmembrane segments spans residues Val56–His76, Val125–Ala145, and Ala180–Phe200.

The protein belongs to the PER33/POM33 family.

Its subcellular location is the membrane. This chain is Transmembrane protein 33 homolog, found in Caenorhabditis elegans.